The sequence spans 819 residues: Protein kinase C-binding protein NELL2 (819 aa).

Positions 1-24 (MHAMESRVLLRTFCVILGLGAVWG) are cleaved as a signal peptide. Residues asparagine 56, asparagine 228, asparagine 296, and asparagine 301 are each glycosylated (N-linked (GlcNAc...) asparagine). In terms of domain architecture, Laminin G-like spans 67–231 (PRSIKASTAT…AQCPDLNRTC (165 aa)). One can recognise a VWFC 1 domain in the interval 275-334 (RTCTVKGTTYRESESWTDGCKNCTCLNGTIQCETLVCPAPDCPPKSAPAYVDGKCCKECK). In terms of domain architecture, EGF-like 1 spans 400–442 (GYDFCSEKHTCMENSVCRNLNDRAVCSCRDGFRALREDNAYCE). 3 cysteine pairs are disulfide-bonded: cysteine 404–cysteine 416, cysteine 410–cysteine 425, and cysteine 427–cysteine 441. Ca(2+)-binding residues include aspartate 443, isoleucine 444, and glutamate 446. Residues 443-484 (DIDECAEGRHYCRENTMCVNTPGSFMCICKTGYIRIDDYSCT) enclose the EGF-like 2; calcium-binding domain. 9 disulfides stabilise this stretch: cysteine 447–cysteine 460, cysteine 454–cysteine 469, cysteine 471–cysteine 483, cysteine 489–cysteine 502, cysteine 496–cysteine 511, cysteine 513–cysteine 524, cysteine 528–cysteine 538, cysteine 532–cysteine 544, and cysteine 546–cysteine 555. Residues asparagine 462, threonine 463, and serine 466 each coordinate Ca(2+). The EGF-like 3; calcium-binding domain maps to 485–525 (EHDECLTNQHNCDENALCFNTVGGHNCVCKPGYTGNGTTCK). N-linked (GlcNAc...) asparagine glycosylation occurs at asparagine 520. An EGF-like 4 domain is found at 526 to 556 (AFCKDGCRNGGACIAANVCACPQGFTGPSCE). Threonine 551 is a glycosylation site (O-linked (GlcNAc...) threonine). Ca(2+)-binding residues include aspartate 558, isoleucine 559, and glutamate 561. Positions 558 to 604 (DIDECSEGFVQCDSRANCINLPGWYHCECRDGYHDNGMFAPGGESCE) constitute an EGF-like 5; calcium-binding domain. Intrachain disulfides connect cysteine 562–cysteine 575, cysteine 569–cysteine 584, and cysteine 586–cysteine 603. Positions 577, 578, and 581 each coordinate Ca(2+). Residues aspartate 605, isoleucine 606, and glutamate 608 each contribute to the Ca(2+) site. Positions 605-640 (DIDECGTGRHSCTNDTICFNLDGGYDCRCPHGKNCT) constitute an EGF-like 6; calcium-binding domain. Intrachain disulfides connect cysteine 609–cysteine 622, cysteine 616–cysteine 631, and cysteine 633–cysteine 639. Residue asparagine 618 is glycosylated (N-linked (GlcNAc...) asparagine). Ca(2+) is bound by residues asparagine 624, leucine 625, and glycine 628. An N-linked (GlcNAc...) asparagine glycan is attached at asparagine 638. Positions 701–759 (SQCLHQNGETVYNSGDTWVQDCRQCRCLQGEVDCWPLACPEVECEFSVLPENECCPRCV) constitute a VWFC 2 domain.

Homotrimer. Interacts with NICOL1; this interaction triggers epididymal differentiation. Interacts (via EGF domains) with ROBO3 (via FN domains); binding to ROBO3 induces repulsive guidance cue for commissural axons. As to expression, expressed in brain and testis but not in epididymis. Expressed in regions flanking the commissural axon trajectory, including the ventral horn.

Its subcellular location is the secreted. Functionally, plays multiple roles in neural tissues, regulates neuronal proliferation, survival, differentiation, polarization, as well as axon guidance and synaptic functions. Plays an important role in axon development during neuronal differentiation through the MAPK intracellular signaling pathway. Via binding to its receptor ROBO3, plays a role in axon guidance, functioning as a repulsive axon guidance cue that contributes to commissural axon guidance to the midline. Required for neuron survival through the modulation of MAPK signaling pathways too. Involved in the regulation of hypothalamic GNRH secretion and the control of puberty. Epididymal-secreted protein that signals through a ROS1-pathway to regulate the epididymal initial segment (IS) maturation, sperm maturation and male fertility. The polypeptide is Protein kinase C-binding protein NELL2 (Mus musculus (Mouse)).